Consider the following 120-residue polypeptide: NAD(P)H-quinone oxidoreductase subunit 3 (120 aa).

Helical transmembrane passes span 10–30 (FLGFLLIAAAVPVLALVTNLI), 64–84 (MFALVFVIFDVETVFLYPWAV), and 89–109 (LGLLAFIEALIFIAILVIALA).

The protein belongs to the complex I subunit 3 family. NDH-1 can be composed of about 15 different subunits; different subcomplexes with different compositions have been identified which probably have different functions.

It is found in the cellular thylakoid membrane. It catalyses the reaction a plastoquinone + NADH + (n+1) H(+)(in) = a plastoquinol + NAD(+) + n H(+)(out). It carries out the reaction a plastoquinone + NADPH + (n+1) H(+)(in) = a plastoquinol + NADP(+) + n H(+)(out). Functionally, NDH-1 shuttles electrons from an unknown electron donor, via FMN and iron-sulfur (Fe-S) centers, to quinones in the respiratory and/or the photosynthetic chain. The immediate electron acceptor for the enzyme in this species is believed to be plastoquinone. Couples the redox reaction to proton translocation, and thus conserves the redox energy in a proton gradient. Cyanobacterial NDH-1 also plays a role in inorganic carbon-concentration. This Prochlorococcus marinus (strain MIT 9301) protein is NAD(P)H-quinone oxidoreductase subunit 3.